Here is a 222-residue protein sequence, read N- to C-terminus: C-8 sterol isomerase ERG2 (222 aa).

A helical membrane pass occupies residues 3 to 23 (FFPLLLLIGVVGYIMNVLFTT).

The protein belongs to the ERG2 family.

It is found in the endoplasmic reticulum membrane. It catalyses the reaction fecosterol = episterol. Its pathway is steroid metabolism; ergosterol biosynthesis; ergosterol from zymosterol: step 2/5. Catalytic activity is inhibited by the morphilines tridemorph, fenpropimorph, and fenpropidin. Functionally, C-8 sterol isomerase; part of the third module of ergosterol biosynthesis pathway that includes the late steps of the pathway. ERG2 catalyzes the reaction which results in unsaturation at C-7 in the B ring of sterols and thus converts fecosterol to episterol. The third module or late pathway involves the ergosterol synthesis itself through consecutive reactions that mainly occur in the endoplasmic reticulum (ER) membrane. Firstly, the squalene synthase ERG9 catalyzes the condensation of 2 farnesyl pyrophosphate moieties to form squalene, which is the precursor of all steroids. Squalene synthase is crucial for balancing the incorporation of farnesyl diphosphate (FPP) into sterol and nonsterol isoprene synthesis. Secondly, the squalene epoxidase ERG1 catalyzes the stereospecific oxidation of squalene to (S)-2,3-epoxysqualene, which is considered to be a rate-limiting enzyme in steroid biosynthesis. Then, the lanosterol synthase ERG7 catalyzes the cyclization of (S)-2,3 oxidosqualene to lanosterol, a reaction that forms the sterol core. In the next steps, lanosterol is transformed to zymosterol through a complex process involving various demethylation, reduction and desaturation reactions. The lanosterol 14-alpha-demethylase ERG11 (also known as CYP51) catalyzes C14-demethylation of lanosterol to produce 4,4'-dimethyl cholesta-8,14,24-triene-3-beta-ol, which is critical for ergosterol biosynthesis. The C-14 reductase ERG24 reduces the C14=C15 double bond of 4,4-dimethyl-cholesta-8,14,24-trienol to produce 4,4-dimethyl-cholesta-8,24-dienol. 4,4-dimethyl-cholesta-8,24-dienol is substrate of the C-4 demethylation complex ERG25-ERG26-ERG27 in which ERG25 catalyzes the three-step monooxygenation required for the demethylation of 4,4-dimethyl and 4alpha-methylsterols, ERG26 catalyzes the oxidative decarboxylation that results in a reduction of the 3-beta-hydroxy group at the C-3 carbon to an oxo group, and ERG27 is responsible for the reduction of the keto group on the C-3. ERG28 has a role as a scaffold to help anchor ERG25, ERG26 and ERG27 to the endoplasmic reticulum and ERG29 regulates the activity of the iron-containing C4-methylsterol oxidase ERG25. Then, the sterol 24-C-methyltransferase ERG6 catalyzes the methyl transfer from S-adenosyl-methionine to the C-24 of zymosterol to form fecosterol. The C-8 sterol isomerase ERG2 catalyzes the reaction which results in unsaturation at C-7 in the B ring of sterols and thus converts fecosterol to episterol. The sterol-C5-desaturase ERG3 then catalyzes the introduction of a C-5 double bond in the B ring to produce 5-dehydroepisterol. The C-22 sterol desaturase ERG5 further converts 5-dehydroepisterol into ergosta-5,7,22,24(28)-tetraen-3beta-ol by forming the C-22(23) double bond in the sterol side chain. Finally, ergosta-5,7,22,24(28)-tetraen-3beta-ol is substrate of the C-24(28) sterol reductase ERG4 to produce ergosterol. The protein is C-8 sterol isomerase ERG2 of Saccharomyces cerevisiae (strain ATCC 204508 / S288c) (Baker's yeast).